The following is a 232-amino-acid chain: 5'-methylthioadenosine/S-adenosylhomocysteine nucleosidase (232 aa).

Glu12 acts as the Proton acceptor in catalysis. Substrate is bound by residues Gly78, Ile152, and 173–174; that span reads ME. The active-site Proton donor is the Asp197.

This sequence belongs to the PNP/UDP phosphorylase family. MtnN subfamily. In terms of assembly, homodimer.

The enzyme catalyses S-adenosyl-L-homocysteine + H2O = S-(5-deoxy-D-ribos-5-yl)-L-homocysteine + adenine. It carries out the reaction S-methyl-5'-thioadenosine + H2O = 5-(methylsulfanyl)-D-ribose + adenine. It catalyses the reaction 5'-deoxyadenosine + H2O = 5-deoxy-D-ribose + adenine. The protein operates within amino-acid biosynthesis; L-methionine biosynthesis via salvage pathway; S-methyl-5-thio-alpha-D-ribose 1-phosphate from S-methyl-5'-thioadenosine (hydrolase route): step 1/2. Catalyzes the irreversible cleavage of the glycosidic bond in both 5'-methylthioadenosine (MTA) and S-adenosylhomocysteine (SAH/AdoHcy) to adenine and the corresponding thioribose, 5'-methylthioribose and S-ribosylhomocysteine, respectively. Also cleaves 5'-deoxyadenosine, a toxic by-product of radical S-adenosylmethionine (SAM) enzymes, into 5-deoxyribose and adenine. Thus, is required for in vivo function of the radical SAM enzymes biotin synthase and lipoic acid synthase, that are inhibited by 5'-deoxyadenosine accumulation. The polypeptide is 5'-methylthioadenosine/S-adenosylhomocysteine nucleosidase (Klebsiella pneumoniae (strain 342)).